Reading from the N-terminus, the 374-residue chain is Homoserine O-acetyltransferase (374 aa).

One can recognise an AB hydrolase-1 domain in the interval 45–353 (NAILVLHALT…PYGHDAFLIE (309 aa)). Catalysis depends on serine 151, which acts as the Nucleophile. Arginine 220 serves as a coordination point for substrate. Residues aspartate 314 and histidine 347 contribute to the active site. Aspartate 348 is a substrate binding site.

The protein belongs to the AB hydrolase superfamily. MetX family. In terms of assembly, homodimer.

It localises to the cytoplasm. The catalysed reaction is L-homoserine + acetyl-CoA = O-acetyl-L-homoserine + CoA. Its pathway is amino-acid biosynthesis; L-methionine biosynthesis via de novo pathway; O-acetyl-L-homoserine from L-homoserine: step 1/1. Functionally, transfers an acetyl group from acetyl-CoA to L-homoserine, forming acetyl-L-homoserine. The polypeptide is Homoserine O-acetyltransferase (Moorella thermoacetica (strain ATCC 39073 / JCM 9320)).